The following is a 684-amino-acid chain: MSAIPAEESDQLLIRPLGAGQEVGRSCIILEFKGRKIMLDCGIHPGLEGMDALPYIDLIDPAEIDLLLISHFHLDHCGALPWFLQKTSFKGRTFMTHATKAIYRWLLSDYVKVSNISADDMLYTETDLEESMDKIETINFHEVKEVAGIKFWCYHAGHVLGAAMFMIEIAGVKLLYTGDFSRQEDRHLMAAEIPNIKPDILIIESTYGTHIHEKREEREARFCNTVHDIVNRGGRGLIPVFALGRAQELLLILDEYWQNHPELHDIPIYYASSLAKKCMAVYQTYVNAMNDKIRKQININNPFVFKHISNLKSMDHFDDIGPSVVMASPGMMQSGLSRELFESWCTDKRNGVIIAGYCVEGTLAKHIMSEPEEITTMSGQKLPLKMSVDYISFSAHTDYQQTSEFIRALKPPHVILVHGEQNEMARLKAALIREYEDNDEVHIEVHNPRNTEAVTLNFRGEKLAKVMGFLADKKPEQGQRVSGILVKRNFNYHILSPCDLSNYTDLAMSTVKQTQAIPYTGPFNLLCYQLQKLTGDVEELEIQEKPALKVFKNITVIQEPGMVVLEWLANPSNDMYADTVTTVILEVQSNPKIRKGAVQKVSKKLEMHVYSKRLEIMLQDIFGEDCVSVKDDSILSVTVDGKTANLNLETRTVECEEGSEDDESLREMVELAAQRLYEALTPVH.

N-acetylserine is present on Ser-2. Zn(2+) is bound by residues His-71, His-73, Asp-75, His-76, His-158, and Asp-179. Residue His-396 is the Proton donor of the active site. His-418 is a Zn(2+) binding site. Glycyl lysine isopeptide (Lys-Gly) (interchain with G-Cter in SUMO) cross-links involve residues Lys-462, Lys-465, and Lys-545. Phosphoserine is present on Ser-659. Thr-681 is modified (phosphothreonine).

This sequence belongs to the metallo-beta-lactamase superfamily. RNA-metabolizing metallo-beta-lactamase-like family. CPSF3 subfamily. As to quaternary structure, component of the cleavage and polyadenylation specificity factor (CPSF) complex, composed of CPSF1, CPSF2, CPSF3, CPSF4 and FIP1L1. Interacts with CPSF2, CSTF2 and SYMPK. Interacts with TUT1; the interaction is direct and mediates the recruitment of the CPSF complex on the 3'UTR of pre-mRNAs. Interacts with WDR33. Interacts with ZC3H3. Requires Zn(2+) as cofactor. Post-translationally, sumoylated on Lys-462, Lys-465 and Lys-545, preferentially by SUMO3.

Its subcellular location is the nucleus. Functionally, component of the cleavage and polyadenylation specificity factor (CPSF) complex that plays a key role in pre-mRNA 3'-end formation, recognizing the AAUAAA signal sequence and interacting with poly(A) polymerase and other factors to bring about cleavage and poly(A) addition. Has endonuclease activity, and functions as an mRNA 3'-end-processing endonuclease. Also involved in the histone 3'-end pre-mRNA processing. U7 snRNP-dependent protein that induces both the 3'-endoribonucleolytic cleavage of histone pre-mRNAs and acts as a 5' to 3' exonuclease for degrading the subsequent downstream cleavage product (DCP) of mature histone mRNAs. Cleavage occurs after the 5'-ACCCA-3' sequence in the histone pre-mRNA leaving a 3'hydroxyl group on the upstream fragment containing the stem loop (SL) and 5' phosphate on the downstream cleavage product (DCP) starting with CU nucleotides. The U7-dependent 5' to 3' exonuclease activity is processive and degrades the DCP RNA substrate even after complete removal of the U7-binding site. Binds to the downstream cleavage product (DCP) of histone pre-mRNAs and the cleaved DCP RNA substrate in a U7 snRNP dependent manner. Required for entering/progressing through S-phase of the cell cycle. Required for the selective processing of microRNAs (miRNAs) during embryonic stem cell differentiation via its interaction with ISY1. Required for the biogenesis of all miRNAs from the pri-miR-17-92 primary transcript except miR-92a. Only required for the biogenesis of miR-290 and miR-96 from the pri-miR-290-295 and pri-miR-96-183 primary transcripts, respectively. The chain is Cleavage and polyadenylation specificity factor subunit 3 (CPSF3) from Homo sapiens (Human).